The primary structure comprises 113 residues: Endoribonuclease SymE (113 aa).

In terms of domain architecture, SpoVT-AbrB spans 29 to 74 (GRYPDYSRIPAITLKGQWLEVAGFATGTAVDVKVMEGCIVLTAQPP).

The protein belongs to the SymE family.

Its subcellular location is the cytoplasm. Involved in the degradation and recycling of damaged RNA. It is itself a target for degradation by the ATP-dependent protease Lon. The protein is Endoribonuclease SymE of Escherichia coli O7:K1 (strain IAI39 / ExPEC).